The chain runs to 435 residues: 3-ketoacyl-CoA thiolase (435 aa).

C98 (acyl-thioester intermediate) is an active-site residue. Residues H391 and C421 each act as proton acceptor in the active site.

This sequence belongs to the thiolase-like superfamily. Thiolase family. In terms of assembly, heterotetramer of two alpha chains (FadJ) and two beta chains (FadI).

The protein localises to the cytoplasm. The catalysed reaction is an acyl-CoA + acetyl-CoA = a 3-oxoacyl-CoA + CoA. Its pathway is lipid metabolism; fatty acid beta-oxidation. Functionally, catalyzes the final step of fatty acid oxidation in which acetyl-CoA is released and the CoA ester of a fatty acid two carbons shorter is formed. The protein is 3-ketoacyl-CoA thiolase of Vibrio cholerae serotype O1 (strain ATCC 39541 / Classical Ogawa 395 / O395).